The following is a 962-amino-acid chain: Translation initiation factor IF-2 (962 aa).

The interval 99–365 is disordered; it reads VKAAQTQAAP…GKKGKKLKLE (267 aa). Residues 117–141 are compositionally biased toward basic and acidic residues; it reads DAAKARAEAAARAEARAKAEAEAAK. Over residues 145–155 the composition is skewed to low complexity; the sequence is AKAGNKAKPAA. Residues 173–216 are compositionally biased toward basic and acidic residues; it reads KPAEESKAEKAQADKMPSKKPAEPKEKAAKPKHERNGKGKDAKK. A compositionally biased stretch (low complexity) spans 219–234; the sequence is KPAAPAVPQPVVSAEE. Positions 235-269 are enriched in basic and acidic residues; the sequence is QAQRDEEARRAAALRAHQEALLKEKQERQARREAM. Residues 270–283 show a composition bias toward low complexity; sequence KQQAEQQAKAAQEA. Residues 338–354 are compositionally biased toward basic and acidic residues; sequence GGRDRNNARNGDDERVR. In terms of domain architecture, tr-type G spans 462 to 631; the sequence is PRPPVVTVMG…LLEAEVLELT (170 aa). The segment at 471–478 is G1; that stretch reads GHVDHGKT. 471–478 serves as a coordination point for GTP; it reads GHVDHGKT. Positions 496-500 are G2; that stretch reads GITQH. A G3 region spans residues 517-520; sequence DTPG. Residues 517 to 521 and 571 to 574 each bind GTP; these read DTPGH and NKID. The segment at 571 to 574 is G4; the sequence is NKID. Residues 607–609 form a G5 region; that stretch reads SAK.

The protein belongs to the TRAFAC class translation factor GTPase superfamily. Classic translation factor GTPase family. IF-2 subfamily.

The protein localises to the cytoplasm. One of the essential components for the initiation of protein synthesis. Protects formylmethionyl-tRNA from spontaneous hydrolysis and promotes its binding to the 30S ribosomal subunits. Also involved in the hydrolysis of GTP during the formation of the 70S ribosomal complex. This is Translation initiation factor IF-2 from Neisseria meningitidis serogroup C (strain 053442).